We begin with the raw amino-acid sequence, 877 residues long: AP-5 complex subunit beta-1 (877 aa).

Probably part of the adaptor protein complex 5 (AP-5), a tetramer composed of AP5B1, AP5M1, AP5S1 and AP5Z1. Interacts with ZFYVE26 and SPG11.

Its function is as follows. As part of AP-5, a probable fifth adaptor protein complex, it may be involved in endosomal transport. This is AP-5 complex subunit beta-1 (AP5B1) from Bos taurus (Bovine).